We begin with the raw amino-acid sequence, 262 residues long: Type III pantothenate kinase (262 aa).

Residue 9–16 participates in ATP binding; sequence DSGNTRVK. Substrate-binding positions include Tyr-93 and 100 to 103; that span reads GSDR. The active-site Proton acceptor is Asp-102. Asp-122 contacts K(+). Thr-125 contacts ATP. A substrate-binding site is contributed by Thr-175.

The protein belongs to the type III pantothenate kinase family. Homodimer. Requires NH4(+) as cofactor. K(+) is required as a cofactor.

It is found in the cytoplasm. It catalyses the reaction (R)-pantothenate + ATP = (R)-4'-phosphopantothenate + ADP + H(+). It functions in the pathway cofactor biosynthesis; coenzyme A biosynthesis; CoA from (R)-pantothenate: step 1/5. Its function is as follows. Catalyzes the phosphorylation of pantothenate (Pan), the first step in CoA biosynthesis. The chain is Type III pantothenate kinase from Nitrosospira multiformis (strain ATCC 25196 / NCIMB 11849 / C 71).